We begin with the raw amino-acid sequence, 491 residues long: MQPSSTLAPVAPIIFLAIAIAAINWIDLARGKGKQSVAYPLSLLTTLVLTAWFGMNAATGETHYAFANLVVIDPMANVLSAFCAAGLFVTLVYTRRYLAERDMFAGEFYMLALFTLGGQIVMITGNNFLTLYLGLELLSLSSYALVALRRESRVTSESAMKYFVLGALASGFLLYGISMMYGATGSLNLGEVFRAVESGRINTTMLAFGVVFIVAGLSFKLGAAPFHMWIPDIYQGSPTAVTLLIAGGPKVAAFALFIRVLVEGLLPLASDWQMMLVVLSIISLAIGNLTAIVQSNLKRMLAYSTISHMGFVLLGLLSGVVANKADGAADAYSSAMFYSVTYLLTTLGTFGIILLRTSKGFEAETLEDLKGMSRRNPWFAFLMLVMMFSLAGIPPTVGFYAKLAVLDAVVQAGMTWLAVVAVLFSLIGAFYYLRIVKLMYFDAPVGEEQLEATFGLRSMLSVNGAAVILLGLFPAALMNLCYQAIRSTLGS.

The next 14 membrane-spanning stretches (helical) occupy residues 6-26 (TLAP…INWI), 37-57 (VAYP…GMNA), 69-89 (LVVI…GLFV), 103-123 (MFAG…IVMI), 128-148 (FLTL…LVAL), 163-183 (FVLG…MYGA), 206-226 (LAFG…AAPF), 238-258 (PTAV…ALFI), 273-293 (QMML…TAIV), 301-321 (LAYS…SGVV), 335-355 (AMFY…IILL), 379-399 (FAFL…TVGF), 413-433 (GMTW…FYYL), and 458-478 (SMLS…AALM).

It belongs to the complex I subunit 2 family. NDH-1 is composed of 14 different subunits. Subunits NuoA, H, J, K, L, M, N constitute the membrane sector of the complex.

It is found in the cell inner membrane. It carries out the reaction a quinone + NADH + 5 H(+)(in) = a quinol + NAD(+) + 4 H(+)(out). NDH-1 shuttles electrons from NADH, via FMN and iron-sulfur (Fe-S) centers, to quinones in the respiratory chain. The immediate electron acceptor for the enzyme in this species is believed to be ubiquinone. Couples the redox reaction to proton translocation (for every two electrons transferred, four hydrogen ions are translocated across the cytoplasmic membrane), and thus conserves the redox energy in a proton gradient. This is NADH-quinone oxidoreductase subunit N from Cupriavidus taiwanensis (strain DSM 17343 / BCRC 17206 / CCUG 44338 / CIP 107171 / LMG 19424 / R1) (Ralstonia taiwanensis (strain LMG 19424)).